An 867-amino-acid polypeptide reads, in one-letter code: GRB2-associated and regulator of MAPK protein 1 (867 aa).

The CABIT stretch occupies residues 12–322 (NNITWSTTTL…GLLQGESWFE (311 aa)). Tyrosine 464 carries the phosphotyrosine modification. Disordered regions lie at residues 511–530 (SADV…AVKE), 536–594 (DAPP…QIES), and 735–758 (PPRT…TADA). Polar residues-rich tracts occupy residues 544–554 (SSKQAGSSSAT) and 569–581 (SPSP…SSGL). Over residues 740–749 (KCTDAKKDAE) the composition is skewed to basic and acidic residues. One can recognise an SAM domain in the interval 802–867 (ISIEEISKSL…QFINGWRPKM (66 aa)).

The protein belongs to the GAREM family.

Functionally, adapter protein that may provide a link between cell surface epidermal growth factor receptor and the MAPK/ERK signaling pathway. May promote cell proliferation. The sequence is that of GRB2-associated and regulator of MAPK protein 1 (garem1) from Danio rerio (Zebrafish).